The chain runs to 238 residues: Ciliary microtubule associated protein 1B (238 aa).

The stretch at 182–207 (PGPCAYHVVNPMIYKTRAPQFTMLGR) is one STPGR repeat. Residues 206–238 (GRTLPPRENTKKPGPASYSVDKVVWSRGSRGRG) form a disordered region.

The protein belongs to the CIMAP family.

It localises to the cell projection. Its subcellular location is the cilium. The protein localises to the flagellum. This chain is Ciliary microtubule associated protein 1B (Cimap1b), found in Mus musculus (Mouse).